A 327-amino-acid polypeptide reads, in one-letter code: Aspartate--ammonia ligase (327 aa).

This sequence belongs to the class-II aminoacyl-tRNA synthetase family. AsnA subfamily.

Its subcellular location is the cytoplasm. The enzyme catalyses L-aspartate + NH4(+) + ATP = L-asparagine + AMP + diphosphate + H(+). It functions in the pathway amino-acid biosynthesis; L-asparagine biosynthesis; L-asparagine from L-aspartate (ammonia route): step 1/1. The polypeptide is Aspartate--ammonia ligase (Bacillus cereus (strain AH187)).